Here is a 333-residue protein sequence, read N- to C-terminus: Glycerol-3-phosphate dehydrogenase [NAD(P)+] (333 aa).

Ser-10, Trp-11, His-31, Arg-32, and Lys-105 together coordinate NADPH. Residues Lys-105, Gly-136, and Ser-138 each coordinate sn-glycerol 3-phosphate. Ala-140 is a binding site for NADPH. Sn-glycerol 3-phosphate contacts are provided by Lys-191, Asp-244, Ser-254, Arg-255, and Asn-256. Lys-191 functions as the Proton acceptor in the catalytic mechanism. Arg-255 contributes to the NADPH binding site. 2 residues coordinate NADPH: Ile-279 and Glu-281.

The protein belongs to the NAD-dependent glycerol-3-phosphate dehydrogenase family.

The protein localises to the cytoplasm. The enzyme catalyses sn-glycerol 3-phosphate + NAD(+) = dihydroxyacetone phosphate + NADH + H(+). It catalyses the reaction sn-glycerol 3-phosphate + NADP(+) = dihydroxyacetone phosphate + NADPH + H(+). It participates in membrane lipid metabolism; glycerophospholipid metabolism. In terms of biological role, catalyzes the reduction of the glycolytic intermediate dihydroxyacetone phosphate (DHAP) to sn-glycerol 3-phosphate (G3P), the key precursor for phospholipid synthesis. The chain is Glycerol-3-phosphate dehydrogenase [NAD(P)+] from Chlorobium chlorochromatii (strain CaD3).